Here is a 462-residue protein sequence, read N- to C-terminus: Ubiquitin carboxyl-terminal hydrolase calypso (462 aa).

The UCH catalytic domain maps to Gly29 to Pro260. Catalysis depends on Cys115, which acts as the Nucleophile. His197 acts as the Proton donor in catalysis. Residues Asn357–Pro385 enclose the ULD domain. The tract at residues Lys387–Lys462 is positively charged C-terminal tail required for binding nucleosomes. Residues Gly413–Thr447 show a composition bias toward low complexity. The interval Gly413 to Lys462 is disordered. Positions Pro448–Lys462 are enriched in basic residues.

Belongs to the peptidase C12 family. BAP1 subfamily. Catalytic component of the polycomb repressive deubiquitinase (PR-DUB) complex, at least composed of caly/calypso, Asx and sba (MBD5/6 homolog). The PR-DUB complex associates with nucleosomes to mediate deubiquitination of histone H2AK118ub1 substrates; the association requires the positively charged C-terminal tail of caly, probably due to direct binding of DNA. Interacts (via ULD domain) with Asx (via DEUBAD domain); the interaction produces a stable heterodimer with a composite binding site for ubiquitin. Homodimerizes (via coiled-coil hinge-region between the UCH and ULD domains) to mediate assembly of 2 copies of the caly-Asx heterodimer into a bisymmetric tetramer; dimerization enhances PR-DUB association with nucleosomes.

It is found in the nucleus. It catalyses the reaction Thiol-dependent hydrolysis of ester, thioester, amide, peptide and isopeptide bonds formed by the C-terminal Gly of ubiquitin (a 76-residue protein attached to proteins as an intracellular targeting signal).. Functionally, catalytic component of the polycomb repressive deubiquitinase (PR-DUB) complex, a complex that specifically mediates deubiquitination of histone H2A monoubiquitinated at 'Lys-119' (H2AK118ub1). Mediates bisymmetric organization of the PR-DUB complex and is involved in association with nucleosomes to mediate deubiquitination. Does not deubiquitinate monoubiquitinated histone H2B. Required to maintain the transcriptionally repressive state of homeotic genes throughout development. The PR-DUB complex has weak or no activity toward 'Lys-48'- and 'Lys-63'-linked polyubiquitin chains. Polycomb group (PcG) protein. The polypeptide is Ubiquitin carboxyl-terminal hydrolase calypso (Drosophila grimshawi (Hawaiian fruit fly)).